The chain runs to 354 residues: uncharacterized protein (354 aa).

2 disordered regions span residues 1–74 and 87–115; these read MGTK…ENCR and SESG…QRAS. N6-acetyllysine is present on K19. Residues 32–41 are compositionally biased toward low complexity; the sequence is EGPSSNSSFH. The segment covering 45 to 54 has biased composition (acidic residues); the sequence is EEGTDLEGDM. S115 and S174 each carry phosphoserine. Over residues 182–199 the composition is skewed to polar residues; that stretch reads QGSSQDLPMQANLSQSNE. Disordered stretches follow at residues 182 to 208 and 235 to 298; these read QGSS…GRDR and QVAD…DELS. Y291 bears the Phosphotyrosine mark. A Phosphoserine modification is found at S292.

This is an uncharacterized protein from Mus musculus (Mouse).